Here is a 385-residue protein sequence, read N- to C-terminus: Urotensin-2 receptor (385 aa).

The Extracellular portion of the chain corresponds to 1–53 (MALSLESTSFPMLAVSRSTASELPGGFNVSHNSSWTGPTDPSSLQDLVATGVI). Residues Asn28 and Asn32 are each glycosylated (N-linked (GlcNAc...) asparagine). A helical membrane pass occupies residues 54-76 (GAVLSTMGVVGVVGNVYTLVVMC). The Cytoplasmic portion of the chain corresponds to 77 to 86 (RFLRASASMY). A helical transmembrane segment spans residues 87–112 (VYVVNLALADLLYLLSIPFIVATYVT). Residues 113-123 (KDWHFGDVGCR) lie on the Extracellular side of the membrane. A disulfide bond links Cys122 and Cys198. A helical transmembrane segment spans residues 124-145 (VLFSLDFLTMHASIFTLTIMSS). Topologically, residues 146–166 (ERYAAVLRPLDTVQRSKGYRK) are cytoplasmic. Residues 167–185 (LLALGTWLLALLLTLPMML) form a helical membrane-spanning segment. At 186-208 (AIRLVRRGSKSLCLPAWGPRAHR) the chain is on the extracellular side. The chain crosses the membrane as a helical span at residues 209 to 231 (TYLTLLFGTSIVGPGLVIGLLYI). At 232–257 (RLARAYWLSQQASFKQTRRLPNPRVL) the chain is on the cytoplasmic side. The helical transmembrane segment at 258–283 (YLILGIVLLFWACFLPFWLWQLLAQY) threads the bilayer. Topologically, residues 284 to 298 (HQAMPLTPETARIIN) are extracellular. A helical transmembrane segment spans residues 299–320 (YLTACLTYGNSCINPFLYTLLT). Topologically, residues 321 to 385 (KNYREYLRGR…SPVPPNGAFV (65 aa)) are cytoplasmic.

The protein belongs to the G-protein coupled receptor 1 family.

It localises to the cell membrane. Its function is as follows. High affinity receptor for urotensin-2 and urotensin-2B. The activity of this receptor is mediated by a G-protein that activate a phosphatidylinositol-calcium second messenger system. This Mus musculus (Mouse) protein is Urotensin-2 receptor (Uts2r).